Here is a 765-residue protein sequence, read N- to C-terminus: Palmitoyltransferase ZDHHC8 (765 aa).

Residues M1 to K13 are Cytoplasmic-facing. A helical transmembrane segment spans residues Y14–F34. Residues T35–G52 are Lumenal-facing. Residues I53–F73 traverse the membrane as a helical segment. The Cytoplasmic segment spans residues P74–Y148. The DHHC domain occupies K104–L154. The active-site S-palmitoyl cysteine intermediate is C134. Residues F149–V169 form a helical membrane-spanning segment. Residues Y170–M190 are Lumenal-facing. The helical transmembrane segment at C191 to V211 threads the bilayer. Topologically, residues T212–V765 are cytoplasmic. A disordered region spans residues G293–P352. Residues G301–L311 show a composition bias toward basic and acidic residues. S337 is modified (phosphoserine). The residue at position 441 (R441) is an Omega-N-methylarginine. Residues L509–R540 are disordered. A phosphoserine mark is found at S606, S627, S675, S725, and S743. Residues G613–R746 are disordered. Low complexity predominate over residues P622–S653.

The protein belongs to the DHHC palmitoyltransferase family. ERF2/ZDHHC9 subfamily.

The protein resides in the golgi apparatus membrane. It is found in the mitochondrion membrane. The enzyme catalyses L-cysteinyl-[protein] + hexadecanoyl-CoA = S-hexadecanoyl-L-cysteinyl-[protein] + CoA. Palmitoyltransferase that catalyzes the addition of palmitate onto various protein substrates and therefore functions in several unrelated biological processes. Through the palmitoylation of ABCA1 regulates the localization of the transporter to the plasma membrane and thereby regulates its function in cholesterol and phospholipid efflux. Could also pamitoylate the D(2) dopamine receptor DRD2 and regulate its stability and localization to the plasma membrane. Could also play a role in glutamatergic transmission. The sequence is that of Palmitoyltransferase ZDHHC8 from Pan troglodytes (Chimpanzee).